We begin with the raw amino-acid sequence, 151 residues long: Large ribosomal subunit protein uL13 (151 aa).

The protein belongs to the universal ribosomal protein uL13 family. Part of the 50S ribosomal subunit.

This protein is one of the early assembly proteins of the 50S ribosomal subunit, although it is not seen to bind rRNA by itself. It is important during the early stages of 50S assembly. The polypeptide is Large ribosomal subunit protein uL13 (Synechococcus elongatus (strain ATCC 33912 / PCC 7942 / FACHB-805) (Anacystis nidulans R2)).